A 147-amino-acid polypeptide reads, in one-letter code: Large ribosomal subunit protein uL15 (147 aa).

The segment at 1 to 62 (MDLSNLRPAI…GQMPLQRRLP (62 aa)) is disordered. Gly residues-rich tracts occupy residues 21-31 (RGPGSGNGKTA) and 42-52 (SGGGVKPGFEG).

Belongs to the universal ribosomal protein uL15 family. As to quaternary structure, part of the 50S ribosomal subunit.

Functionally, binds to the 23S rRNA. The protein is Large ribosomal subunit protein uL15 of Syntrophotalea carbinolica (strain DSM 2380 / NBRC 103641 / GraBd1) (Pelobacter carbinolicus).